The following is a 603-amino-acid chain: MRRRAARGPGPPPPGPGLSRLPLPLLLLLALGTRGGCAAPAPAPRAEDLSLGVEWLSRFGYLPPADPTTGQLQTQEELSKAITAMQQFGGLEATGILDEATLALMKTPRCSLPDLPVLTQARRRRQAPAPTKWNKRNLSWRVRTFPRDSPLGHDTVRALMYYALKVWSDIAPLNFHEVAGSAADIQIDFSKADHNDGYPFDGPGGTVAHAFFPGHHHTAGDTHFDDDEAWTFRSSDAHGMDLFAVAVHEFGHAIGLSHVAAAHSIMRPYYQGPVGDPLRYGLPYEDKVRVWQLYGVRESVSPTAQPEEPPLLPEPPDNRSSAPPRKDVPHRCSTHFDAVAQIRGEAFFFKGKYFWRLTRDRHLVSLQPAQMHRFWRGLPLHLDSVDAVYERTSDHKIVFFKGDRYWVFKDNNVEEGYPRPVSDFSLPPGGIDAAFSWAHNDRTYFFKDQLYWRYDDHTRHMDPGYPAQSPLWRGVPSTLDDAMRWSDGASYFFRGQEYWKVLDGELEVAPGYPQSTARDWLVCGDSQADGSVAAGVDAAEGPRAPPGQHDQSRSEDGYEVCSCTSGASSPPGAPGPLVAATMLLLLPPLSPGALWTAAQALTL.

Residues 1-35 (MRRRAARGPGPPPPGPGLSRLPLPLLLLLALGTRG) form the signal peptide. Residues 36-125 (GCAAPAPAPR…PVLTQARRRR (90 aa)) constitute a propeptide that is removed on maturation. The Cysteine switch signature appears at 108–115 (PRCSLPDL). Position 110 (C110) interacts with Zn(2+). N-linked (GlcNAc...) asparagine glycosylation is present at N137. H248 contributes to the Zn(2+) binding site. E249 is a catalytic residue. Zn(2+) is bound by residues H252 and H258. A disordered region spans residues 301–329 (SPTAQPEEPPLLPEPPDNRSSAPPRKDVP). A glycan (N-linked (GlcNAc...) asparagine) is linked at N318. C332 and C523 are disulfide-bonded. Hemopexin repeat units follow at residues 333–378 (STHF…WRGL), 382–427 (LDSV…FSLP), 428–475 (PGGI…WRGV), and 476–523 (PSTL…WLVC). The interval 537 to 571 (DAAEGPRAPPGQHDQSRSEDGYEVCSCTSGASSPP) is disordered. S565 is lipidated: GPI-anchor amidated serine. Positions 566–603 (GASSPPGAPGPLVAATMLLLLPPLSPGALWTAAQALTL) are cleaved as a propeptide — removed in mature form.

The protein belongs to the peptidase M10A family. Zn(2+) is required as a cofactor. The cofactor is Ca(2+). Post-translationally, the precursor is cleaved by a furin endopeptidase. Expressed in brain, leukocytes, colon, ovary testis and breast cancer. Expressed also in many transformed and non-transformed cell types.

The protein localises to the cell membrane. Its subcellular location is the secreted. It is found in the extracellular space. The protein resides in the extracellular matrix. Its function is as follows. Endopeptidase that degrades various components of the extracellular matrix, such as fibrin. May be involved in the activation of membrane-bound precursors of growth factors or inflammatory mediators, such as tumor necrosis factor-alpha. May also be involved in tumoral process. Cleaves pro-TNF-alpha at the '74-Ala-|-Gln-75' site. Not obvious if able to proteolytically activate progelatinase A. Does not hydrolyze collagen types I, II, III, IV and V, gelatin, fibronectin, laminin, decorin nor alpha1-antitrypsin. This Homo sapiens (Human) protein is Matrix metalloproteinase-17 (MMP17).